The chain runs to 260 residues: Alpha- and beta-fibrinogenase OhS1 (260 aa).

Residues 1–18 (MALIRVLASLLILQLSYA) form the signal peptide. Residues 19–24 (VTPFDR) constitute a propeptide that is removed on maturation. Residues 25-248 (IIGGFECNEY…YIDWIEGIIA (224 aa)) enclose the Peptidase S1 domain. 6 cysteine pairs are disulfide-bonded: C31–C163, C50–C66, C98–C255, C142–C209, C174–C188, and C199–C224. The N-linked (GlcNAc...) asparagine glycan is linked to N44. The active-site Charge relay system is the H65. N79 carries an N-linked (GlcNAc...) asparagine glycan. The Charge relay system role is filled by D110. N117 and N121 each carry an N-linked (GlcNAc...) asparagine glycan. Residue S203 is the Charge relay system of the active site. A glycan (N-linked (GlcNAc...) asparagine) is linked at N250.

The protein belongs to the peptidase S1 family. Snake venom subfamily. In terms of assembly, monomer. In terms of tissue distribution, expressed by the venom gland.

The protein resides in the secreted. With respect to regulation, completely inhibited by NPGB, PMSF, diisopropylfluorophosphate (DFP), benzamidine and soybean trypsin inhibitor. Not inhibited by EDTA. Snake venom serine protease that possesses potent fibrinogenolytic (on both alpha- (FGA) and beta-chains (FGB)) and amidolytic activities. Selectively cleaves Arg-|-Xaa or Lys-|-Xaa bonds. This Ophiophagus hannah (King cobra) protein is Alpha- and beta-fibrinogenase OhS1.